The primary structure comprises 31 residues: Antifungal protein 1 (31 aa).

Composition is skewed to basic and acidic residues over residues 1–10 (PGAGSQEERM) and 18–31 (DFSH…MVRE). The tract at residues 1 to 31 (PGAGSQEERMQGQMEGQDFSHEERFLSMVRE) is disordered.

As to quaternary structure, heterodimer; disulfide-linked. In terms of processing, disulfide bonds.

Functionally, has antifungal activity against C.gloeosporioides but not against B.cinerea and Fusarium sp. or against various yeasts. Has no antibacterial activity. This Passiflora alata (Winged-stem passion flower) protein is Antifungal protein 1.